A 59-amino-acid chain; its full sequence is Large ribosomal subunit protein bL32 (59 aa).

Residues 1-59 form a disordered region; the sequence is MAVQQNKKSPSKRGMHRAHDFLTAPVIAIEPSTGEAHRRHHISPNGFYRGRKVVKGKDE. Positions 49–59 are enriched in basic residues; it reads RGRKVVKGKDE.

Belongs to the bacterial ribosomal protein bL32 family.

The protein is Large ribosomal subunit protein bL32 of Laribacter hongkongensis (strain HLHK9).